The sequence spans 136 residues: Cancer/testis antigen 62 (136 aa).

Residues 1–22 (MMHTTSYRRLSPPHLTDQPSAY) are disordered.

Testis specific. Expressed in cancer cell lines.

The protein is Cancer/testis antigen 62 (CT62) of Homo sapiens (Human).